Consider the following 589-residue polypeptide: ATP-dependent ubiquitin transferase-like protein Cap2 (589 aa).

Residue Cys13 forms a Glycyl cysteine dithioester (Cys-Gly) (interchain with G-Cter in DncV) linkage. Lys77 is covalently cross-linked (Glycyl lysine isopeptide (Lys-Gly) (interchain with G-Cter in DncV)). The active-site For E2-like domain is the Cys91. Glycyl lysine isopeptide (Lys-Gly) (interchain with G-Cter in DncV) cross-links involve residues Lys305, Lys387, and Lys484. A Glycyl cysteine dithioester (Cys-Gly) (interchain with G-Cter in DncV) cross-link involves residue Cys493. Catalysis depends on for E1-like domain residues Cys493, Cys496, and Cys513. Cys513 participates in a covalent cross-link: Glycyl cysteine dithioester (Cys-Gly) (interchain with G-Cter in DncV). Lys523 participates in a covalent cross-link: Glycyl lysine isopeptide (Lys-Gly) (interchain with G-Cter in DncV).

The protein in the C-terminal section; belongs to the HesA/MoeB/ThiF family. As to quaternary structure, a Cap2 dimer is bound on either side by a DncV monomer. In terms of processing, conjugated to DncV via 5 different Lys residues and 3 Cys residues.

In terms of biological role, CD-NTase priming component of a CBASS antiviral system. CBASS (cyclic oligonucleotide-based antiphage signaling system) provides immunity against bacteriophages. The CD-NTase protein (DncV) synthesizes cyclic nucleotides in response to infection; these serve as specific second messenger signals. The signals activate a diverse range of effectors, leading to bacterial cell death and thus abortive phage infection. A type II-A(GA) CBASS system. Conjugates DncV to itself in vitro and to other cellular proteins in vivo; conjugation requires ATP. This primes DncV, upon phage infection CdnA activates and makes cyclic nucleotides. Its function is as follows. Protects E.coli against phage infection. When capV and dncV are introduced in E.coli MG1655 there is 1000-fold protection against phage P1; protection against other phage (T2, T4, T5, T6 and lambda-vir) requires the 2 subsequent genes. In another paper the capV-dncV-cap2-cap3 operon gives 10(4)-10(5)-fold protection against phages lambda, T2, T4 and T6, about 1000-fold protection against P1 and 10-fold protection against T5. This is ATP-dependent ubiquitin transferase-like protein Cap2 from Escherichia coli (strain TW11681).